A 449-amino-acid chain; its full sequence is Chromosomal replication initiator protein DnaA (449 aa).

Residues 1 to 73 (MTQNPQWLWQ…TETIAELLQQ (73 aa)) form a domain I, interacts with DnaA modulators region. The segment at 73-109 (QPVKVRLTSPEGNTLAATQSFYSSRSGQSTRPGKKTP) is domain II. The segment covering 90 to 103 (TQSFYSSRSGQSTR) has biased composition (polar residues). The tract at residues 90 to 110 (TQSFYSSRSGQSTRPGKKTPE) is disordered. The segment at 110 to 326 (ELNSKYTFSR…GALLRAVTHI (217 aa)) is domain III, AAA+ region. The ATP site is built by Gly-154, Gly-156, Lys-157, and Thr-158. The interval 327-449 (AISGLPMTVE…DRINHHHQNL (123 aa)) is domain IV, binds dsDNA.

This sequence belongs to the DnaA family. As to quaternary structure, oligomerizes as a right-handed, spiral filament on DNA at oriC.

It localises to the cytoplasm. Its function is as follows. Plays an essential role in the initiation and regulation of chromosomal replication. ATP-DnaA binds to the origin of replication (oriC) to initiate formation of the DNA replication initiation complex once per cell cycle. Binds the DnaA box (a 9 base pair repeat at the origin) and separates the double-stranded (ds)DNA. Forms a right-handed helical filament on oriC DNA; dsDNA binds to the exterior of the filament while single-stranded (ss)DNA is stabiized in the filament's interior. The ATP-DnaA-oriC complex binds and stabilizes one strand of the AT-rich DNA unwinding element (DUE), permitting loading of DNA polymerase. After initiation quickly degrades to an ADP-DnaA complex that is not apt for DNA replication. Binds acidic phospholipids. The sequence is that of Chromosomal replication initiator protein DnaA from Picosynechococcus sp. (strain ATCC 27264 / PCC 7002 / PR-6) (Agmenellum quadruplicatum).